Here is a 150-residue protein sequence, read N- to C-terminus: Large ribosomal subunit protein bL9 (150 aa).

This sequence belongs to the bacterial ribosomal protein bL9 family.

Functionally, binds to the 23S rRNA. The polypeptide is Large ribosomal subunit protein bL9 (Janthinobacterium sp. (strain Marseille) (Minibacterium massiliensis)).